The primary structure comprises 154 residues: Superoxide dismutase [Cu-Zn] (154 aa).

Histidine 47, histidine 49, and histidine 64 together coordinate Cu cation. Cysteines 58 and 147 form a disulfide. Residues histidine 64, histidine 72, histidine 81, and aspartate 84 each contribute to the Zn(2+) site. Residue histidine 121 coordinates Cu cation. Residues 122–143 (GGTDDLGKGGNEESLKTGNAGP) form a disordered region. Positions 123–136 (GTDDLGKGGNEESL) are enriched in basic and acidic residues. Substrate is bound at residue arginine 144.

The protein belongs to the Cu-Zn superoxide dismutase family. As to quaternary structure, homodimer. The cofactor is Cu cation. Zn(2+) is required as a cofactor.

The protein resides in the cytoplasm. It carries out the reaction 2 superoxide + 2 H(+) = H2O2 + O2. In terms of biological role, destroys radicals which are normally produced within the cells and which are toxic to biological systems. This is Superoxide dismutase [Cu-Zn] (SOD1) from Cordyceps militaris (Caterpillar fungus).